The following is a 734-amino-acid chain: Monosaccharide-sensing protein 1 (734 aa).

Transmembrane regions (helical) follow at residues 6–26 (LVAL…ATIA), 44–64 (GLVV…SGPI), 79–99 (VMYF…VLCF), 102–122 (LLNG…ISET), 133–153 (TLPQ…VFTM), and 163–183 (AMLG…VFYL). The segment at 351-403 (YNKDNDDYATDDGAGDDDDSDNDLRSPLMSRQTTSMDKDMIPHPTSGSTLSMR) is disordered. The span at 357-371 (DYATDDGAGDDDDSD) shows a compositional bias: acidic residues. Phosphoserine occurs at positions 446 and 480. 6 helical membrane-spanning segments follow: residues 510–530 (ALVV…NGVL), 556–576 (ASFL…VVAM), 588–608 (LLWT…SELI), 621–641 (GCVV…PNIL), 653–673 (LCIA…TYSL), and 680–700 (IGLV…WIFV).

This sequence belongs to the major facilitator superfamily. Sugar transporter (TC 2.A.1.1) family. Binds to VIK at the tonoplast. Phosphorylated by VIK; this activation promotes carrier activity. As to expression, mostly expressed in juvenile and adult leaves, to a lower extent, in flower tissues, and, at low levels, in roots and stems.

It localises to the vacuole membrane. It carries out the reaction D-glucose(out) + H(+)(in) = D-glucose(in) + H(+)(out). It catalyses the reaction sucrose(out) + H(+)(in) = sucrose(in) + H(+)(out). Enhanced activation by VIK-mediated phosphorylation promoting carrier activity and consequently vacuolar sugar accumulation. Its function is as follows. Sugar proton-coupled antiporter which contributes to vacuolar sugar import (e.g. monosaccharides including glucose, sucrose and fructose), particularly during stress responses (e.g. in response to cold). Required for cytosolic glucose homeostasis. This chain is Monosaccharide-sensing protein 1, found in Arabidopsis thaliana (Mouse-ear cress).